The following is a 783-amino-acid chain: Cyclic di-GMP phosphodiesterase NbdA (783 aa).

Positions 81–274 (YSPSLVALAF…FTGMAALVLS (194 aa)) constitute an MHYT domain. 7 consecutive transmembrane segments (helical) span residues 84–104 (SLVA…LDMV), 120–140 (IGAF…MLAF), 150–170 (LPIT…TMYM), 176–196 (FGLL…AAMH), 215–235 (LFAL…AAVP), 255–275 (LLAG…VLSV), and 292–312 (LGWL…WAAW). Residues 313–783 (SEKQRERRLS…APPLRSLNQA (471 aa)) lie on the Cytoplasmic side of the membrane. Residues 375–507 (KGLAVMFLDL…GRNNAQFFSR (133 aa)) enclose the GGDEF domain. The region spanning 516–770 (ELQMEEELRQ…ALEEFLRAYR (255 aa)) is the EAL domain. Residues glutamine 537, glutamate 551, arginine 555, asparagine 610, and asparagine 615 each coordinate 3',3'-c-di-GMP. Glutamate 551 is a binding site for Mg(2+). Position 610 (asparagine 610) interacts with Mg(2+). The Mg(2+) site is built by glutamate 642, aspartate 672, and aspartate 673. Residue aspartate 672 participates in 3',3'-c-di-GMP binding. Arginine 696 is a 3',3'-c-di-GMP binding site. A Mg(2+)-binding site is contributed by glutamate 729. Positions 732 and 751 each coordinate 3',3'-c-di-GMP.

The cofactor is Mg(2+).

It is found in the cell inner membrane. It catalyses the reaction 3',3'-c-di-GMP + H2O = 5'-phosphoguanylyl(3'-&gt;5')guanosine + H(+). Its activity is regulated as follows. PDE activity is stimulated by GTP. It could also be stimulated by NO. Functionally, displays c-di-GMP-specific phosphodiesterase (PDE) activity. Seems to play a specific role in nitric oxide (NO)-induced biofilm dispersion. Enhanced NbdA synthesis in the presence of NO increases PDE activity, leading to reduced cellular c-di-GMP levels and biofilm dispersion. Does not show diguanylate cyclase (DGC) activity. In Pseudomonas aeruginosa (strain ATCC 15692 / DSM 22644 / CIP 104116 / JCM 14847 / LMG 12228 / 1C / PRS 101 / PAO1), this protein is Cyclic di-GMP phosphodiesterase NbdA.